The sequence spans 192 residues: Adenylate kinase (192 aa).

ATP is bound at residue 10–15; sequence GAGKGT. Residues 30–59 are NMP; sequence STGDMLREVIRRETEIGKKAKAMINAGTLV. Residues Thr31, Arg36, 57-59, 85-88, and Gln92 contribute to the AMP site; these read TLV and GYPR. The segment at 126–142 is LID; sequence KRVQETIIAGGQVRSDD. Arg127 contributes to the ATP binding site. 2 residues coordinate AMP: Arg139 and Arg150. Residue Ile178 coordinates ATP.

This sequence belongs to the adenylate kinase family. In terms of assembly, monomer.

It localises to the cytoplasm. It carries out the reaction AMP + ATP = 2 ADP. It participates in purine metabolism; AMP biosynthesis via salvage pathway; AMP from ADP: step 1/1. In terms of biological role, catalyzes the reversible transfer of the terminal phosphate group between ATP and AMP. Plays an important role in cellular energy homeostasis and in adenine nucleotide metabolism. The polypeptide is Adenylate kinase (Bartonella henselae (strain ATCC 49882 / DSM 28221 / CCUG 30454 / Houston 1) (Rochalimaea henselae)).